Consider the following 317-residue polypeptide: Acetyl-coenzyme A carboxylase carboxyl transferase subunit alpha (317 aa).

The CoA carboxyltransferase C-terminal domain maps to 40–294; sequence RLQHKSQELT…KQQILADLAE (255 aa).

It belongs to the AccA family. In terms of assembly, acetyl-CoA carboxylase is a heterohexamer composed of biotin carboxyl carrier protein (AccB), biotin carboxylase (AccC) and two subunits each of ACCase subunit alpha (AccA) and ACCase subunit beta (AccD).

It localises to the cytoplasm. The enzyme catalyses N(6)-carboxybiotinyl-L-lysyl-[protein] + acetyl-CoA = N(6)-biotinyl-L-lysyl-[protein] + malonyl-CoA. It functions in the pathway lipid metabolism; malonyl-CoA biosynthesis; malonyl-CoA from acetyl-CoA: step 1/1. In terms of biological role, component of the acetyl coenzyme A carboxylase (ACC) complex. First, biotin carboxylase catalyzes the carboxylation of biotin on its carrier protein (BCCP) and then the CO(2) group is transferred by the carboxyltransferase to acetyl-CoA to form malonyl-CoA. In Haemophilus ducreyi (strain 35000HP / ATCC 700724), this protein is Acetyl-coenzyme A carboxylase carboxyl transferase subunit alpha.